Reading from the N-terminus, the 534-residue chain is GMP synthase [glutamine-hydrolyzing] (534 aa).

A Glutamine amidotransferase type-1 domain is found at 20–210 (MLIILDFGSQ…VYHICDCEPT (191 aa)). The active-site Nucleophile is Cys97. Catalysis depends on residues His184 and Glu186. The GMPS ATP-PPase domain maps to 211 to 409 (WTTETFVEEA…LGLPEEIVKR (199 aa)). ATP is bound at residue 238–244 (SGGVDSS).

As to quaternary structure, homodimer.

It catalyses the reaction XMP + L-glutamine + ATP + H2O = GMP + L-glutamate + AMP + diphosphate + 2 H(+). The protein operates within purine metabolism; GMP biosynthesis; GMP from XMP (L-Gln route): step 1/1. Its function is as follows. Catalyzes the synthesis of GMP from XMP. This is GMP synthase [glutamine-hydrolyzing] from Synechococcus sp. (strain ATCC 27144 / PCC 6301 / SAUG 1402/1) (Anacystis nidulans).